Here is a 316-residue protein sequence, read N- to C-terminus: Acetyl-coenzyme A carboxylase carboxyl transferase subunit alpha (316 aa).

Residues 39-293 (RLQDKSKALT…RGELLTQLKM (255 aa)) enclose the CoA carboxyltransferase C-terminal domain.

The protein belongs to the AccA family. Acetyl-CoA carboxylase is a heterohexamer composed of biotin carboxyl carrier protein (AccB), biotin carboxylase (AccC) and two subunits each of ACCase subunit alpha (AccA) and ACCase subunit beta (AccD).

It is found in the cytoplasm. The catalysed reaction is N(6)-carboxybiotinyl-L-lysyl-[protein] + acetyl-CoA = N(6)-biotinyl-L-lysyl-[protein] + malonyl-CoA. The protein operates within lipid metabolism; malonyl-CoA biosynthesis; malonyl-CoA from acetyl-CoA: step 1/1. Its function is as follows. Component of the acetyl coenzyme A carboxylase (ACC) complex. First, biotin carboxylase catalyzes the carboxylation of biotin on its carrier protein (BCCP) and then the CO(2) group is transferred by the carboxyltransferase to acetyl-CoA to form malonyl-CoA. In Pseudomonas aeruginosa (strain LESB58), this protein is Acetyl-coenzyme A carboxylase carboxyl transferase subunit alpha.